Here is a 373-residue protein sequence, read N- to C-terminus: Centrosomal protein of 41 kDa (373 aa).

A disordered region spans residues 91 to 137 (LEDNDSATSEADAEIAAKTNGKGSPEEQSPSPVQFINSTGAGDSSRS). 2 positions are modified to phosphoserine: serine 96 and serine 99. At threonine 109 the chain carries Phosphothreonine. A phosphoserine mark is found at serine 114 and serine 121. A compositionally biased stretch (polar residues) spans 116 to 137 (EEQSPSPVQFINSTGAGDSSRS). Residues 169 to 266 (PDCPFLLLDV…LAQKFPEGLV (98 aa)) enclose the Rhodanese domain. A disordered region spans residues 317-373 (DQGPADNPSRLNQNNSAGKDSKVAACRGGQNLPTSCPASHSSPRTLTSGHLQGKPWK). Residues 325-334 (SRLNQNNSAG) show a composition bias toward polar residues. Arginine 343 carries the post-translational modification Omega-N-methylarginine. The segment covering 347 to 366 (NLPTSCPASHSSPRTLTSGH) has biased composition (polar residues).

It belongs to the CEP41 family. In terms of assembly, found in a complex with TTLL6.

The protein resides in the cytoplasm. It is found in the cytoskeleton. The protein localises to the microtubule organizing center. Its subcellular location is the centrosome. It localises to the cell projection. The protein resides in the cilium. It is found in the cilium basal body. Functionally, required during ciliogenesis for tubulin glutamylation in cilium. Probably acts by participating in the transport of TTLL6, a tubulin polyglutamylase, between the basal body and the cilium. This Mus musculus (Mouse) protein is Centrosomal protein of 41 kDa (Cep41).